A 557-amino-acid polypeptide reads, in one-letter code: Protein NRT1/ PTR FAMILY 5.10 (557 aa).

2 consecutive transmembrane segments (helical) span residues 49 to 67 (FAYY…GPLG) and 79 to 99 (AWSG…DSFL). Thr-104 bears the Phosphothreonine mark. 10 helical membrane-spanning segments follow: residues 105-125 (ILAA…SAMI), 144-164 (VITF…HKPC), 186-206 (SFFN…LWVL), 215-235 (WALG…VLLL), 320-340 (APIW…PTFF), 365-385 (FISL…IPIA), 401-421 (IGTG…VEMK), 443-463 (VWWL…AMVG), 479-499 (VGLA…SFMI), and 526-546 (YFYW…LYVA).

Belongs to the major facilitator superfamily. Proton-dependent oligopeptide transporter (POT/PTR) (TC 2.A.17) family. As to expression, expressed in shoots, roots and stems. Detected in leaves, flowers and siliques.

It localises to the membrane. The chain is Protein NRT1/ PTR FAMILY 5.10 (NPF5.10) from Arabidopsis thaliana (Mouse-ear cress).